Here is a 142-residue protein sequence, read N- to C-terminus: Ribosome-binding factor A (142 aa).

The segment at 118 to 142 (DKNGDAEVDDTQVDDEPSVDSEKGE) is disordered. The segment covering 123 to 136 (AEVDDTQVDDEPSV) has biased composition (acidic residues).

The protein belongs to the RbfA family. In terms of assembly, monomer. Binds 30S ribosomal subunits, but not 50S ribosomal subunits or 70S ribosomes.

The protein localises to the cytoplasm. Its function is as follows. One of several proteins that assist in the late maturation steps of the functional core of the 30S ribosomal subunit. Associates with free 30S ribosomal subunits (but not with 30S subunits that are part of 70S ribosomes or polysomes). Required for efficient processing of 16S rRNA. May interact with the 5'-terminal helix region of 16S rRNA. This Colwellia psychrerythraea (strain 34H / ATCC BAA-681) (Vibrio psychroerythus) protein is Ribosome-binding factor A.